The chain runs to 131 residues: Phosphoribosyl-AMP cyclohydrolase (131 aa).

Mg(2+) is bound at residue aspartate 76. Cysteine 77 contributes to the Zn(2+) binding site. Mg(2+)-binding residues include aspartate 78 and aspartate 80. Cysteine 94 and cysteine 101 together coordinate Zn(2+).

This sequence belongs to the PRA-CH family. In terms of assembly, homodimer. Mg(2+) serves as cofactor. It depends on Zn(2+) as a cofactor.

The protein localises to the cytoplasm. The catalysed reaction is 1-(5-phospho-beta-D-ribosyl)-5'-AMP + H2O = 1-(5-phospho-beta-D-ribosyl)-5-[(5-phospho-beta-D-ribosylamino)methylideneamino]imidazole-4-carboxamide. It functions in the pathway amino-acid biosynthesis; L-histidine biosynthesis; L-histidine from 5-phospho-alpha-D-ribose 1-diphosphate: step 3/9. In terms of biological role, catalyzes the hydrolysis of the adenine ring of phosphoribosyl-AMP. This is Phosphoribosyl-AMP cyclohydrolase from Stutzerimonas stutzeri (strain A1501) (Pseudomonas stutzeri).